Here is a 273-residue protein sequence, read N- to C-terminus: Dermonecrotic toxin LhSicTox-alphaIA1ii (273 aa).

Histidine 5 is an active-site residue. 2 residues coordinate Mg(2+): glutamate 25 and aspartate 27. Histidine 41 functions as the Nucleophile in the catalytic mechanism. Intrachain disulfides connect cysteine 45–cysteine 51 and cysteine 47–cysteine 190. Aspartate 85 lines the Mg(2+) pocket.

Belongs to the arthropod phospholipase D family. Class II subfamily. Mg(2+) is required as a cofactor. Expressed by the venom gland.

The protein resides in the secreted. The catalysed reaction is an N-(acyl)-sphingosylphosphocholine = an N-(acyl)-sphingosyl-1,3-cyclic phosphate + choline. It carries out the reaction an N-(acyl)-sphingosylphosphoethanolamine = an N-(acyl)-sphingosyl-1,3-cyclic phosphate + ethanolamine. It catalyses the reaction a 1-acyl-sn-glycero-3-phosphocholine = a 1-acyl-sn-glycero-2,3-cyclic phosphate + choline. The enzyme catalyses a 1-acyl-sn-glycero-3-phosphoethanolamine = a 1-acyl-sn-glycero-2,3-cyclic phosphate + ethanolamine. In terms of biological role, dermonecrotic toxins cleave the phosphodiester linkage between the phosphate and headgroup of certain phospholipids (sphingolipid and lysolipid substrates), forming an alcohol (often choline) and a cyclic phosphate. This toxin acts on sphingomyelin (SM). It may also act on ceramide phosphoethanolamine (CPE), lysophosphatidylcholine (LPC) and lysophosphatidylethanolamine (LPE), but not on lysophosphatidylserine (LPS), and lysophosphatidylglycerol (LPG). It acts by transphosphatidylation, releasing exclusively cyclic phosphate products as second products. Induces dermonecrosis, hemolysis, increased vascular permeability, edema, inflammatory response, and platelet aggregation. This chain is Dermonecrotic toxin LhSicTox-alphaIA1ii, found in Loxosceles hirsuta (Recluse spider).